The chain runs to 126 residues: UPF0102 protein MXAN_3551 (126 aa).

The protein belongs to the UPF0102 family.

The polypeptide is UPF0102 protein MXAN_3551 (Myxococcus xanthus (strain DK1622)).